Reading from the N-terminus, the 102-residue chain is Small ribosomal subunit protein uS10 (102 aa).

It belongs to the universal ribosomal protein uS10 family. In terms of assembly, part of the 30S ribosomal subunit.

Involved in the binding of tRNA to the ribosomes. In Methanococcus maripaludis (strain C6 / ATCC BAA-1332), this protein is Small ribosomal subunit protein uS10.